Here is a 393-residue protein sequence, read N- to C-terminus: Formate-dependent phosphoribosylglycinamide formyltransferase (393 aa).

N(1)-(5-phospho-beta-D-ribosyl)glycinamide-binding positions include 22 to 23 (EL) and Glu-82. ATP is bound by residues Arg-114, Lys-155, 160-165 (SSGKGQ), 195-198 (ESFV), and Glu-203. One can recognise an ATP-grasp domain in the interval 119–308 (RLAAEELGLR…EFALHVRAVL (190 aa)). The Mg(2+) site is built by Glu-267 and Glu-279. Residues Asp-286, Lys-356, and 363-364 (RR) each bind N(1)-(5-phospho-beta-D-ribosyl)glycinamide.

It belongs to the PurK/PurT family. In terms of assembly, homodimer.

It carries out the reaction N(1)-(5-phospho-beta-D-ribosyl)glycinamide + formate + ATP = N(2)-formyl-N(1)-(5-phospho-beta-D-ribosyl)glycinamide + ADP + phosphate + H(+). It participates in purine metabolism; IMP biosynthesis via de novo pathway; N(2)-formyl-N(1)-(5-phospho-D-ribosyl)glycinamide from N(1)-(5-phospho-D-ribosyl)glycinamide (formate route): step 1/1. Involved in the de novo purine biosynthesis. Catalyzes the transfer of formate to 5-phospho-ribosyl-glycinamide (GAR), producing 5-phospho-ribosyl-N-formylglycinamide (FGAR). Formate is provided by PurU via hydrolysis of 10-formyl-tetrahydrofolate. The polypeptide is Formate-dependent phosphoribosylglycinamide formyltransferase (Oleidesulfovibrio alaskensis (strain ATCC BAA-1058 / DSM 17464 / G20) (Desulfovibrio alaskensis)).